The sequence spans 419 residues: Transcription termination factor Rho (419 aa).

In terms of domain architecture, Rho RNA-BD spans 48 to 123 (EISGDGVLEI…LKVDSINFDR (76 aa)). RNA-binding stretches follow at residues 61-66 (GFGFLR), 78-80 (DIY), and 108-110 (ERY). ATP-binding positions include 169–174 (GKGQRG), 181–186 (KAGKTI), and R212. The segment at 284 to 288 (VLTGG) is RNA-binding 2.

The protein belongs to the Rho family. In terms of assembly, homohexamer. The homohexamer assembles into an open ring structure.

In terms of biological role, facilitates transcription termination by a mechanism that involves Rho binding to the nascent RNA, activation of Rho's RNA-dependent ATPase activity, and release of the mRNA from the DNA template. This chain is Transcription termination factor Rho, found in Pseudomonas aeruginosa (strain ATCC 15692 / DSM 22644 / CIP 104116 / JCM 14847 / LMG 12228 / 1C / PRS 101 / PAO1).